Consider the following 946-residue polypeptide: MTLVLFATEYDSAHIVANVLSQTPTDHCVFPLLVKHQVSRRVYFCLQTQKCSDSRRVAPVFAVNNETLQLSRYLAARQPIPLSALIASLDEAETQPLYRHLFRTPVLSPEHGGEVREFKHLVYFHHAAVLRHLNQVFLCPTSPSWFISVFGHTEGQVLLTMAYYLFEGQYSTISTVEEYVRSFCTRDLGTIIPTHASMGEFARLLLGSPFRQRVSAFVAYAVARNRRDYTELEQVDTQINAFRERARLPDTVCVHYVYLAYRTALARARLLEYRRVVAYDADAAPEAQCTREPGFLGRRLSTELLDVMQKYFSLDNFLHDYVETHLLRLDESPHSATSPHGLGLAGYGGRIDGTHLAGFFGTSTQLARQLERINTLSESVFSPLERSLSGLLRLCASLRTAQTYTTGTLTRYSQRRYLLPEPALAPLLERPLPVYRVHLPNDQHVFCAVASETWHRSLFPRDLLRHVPDSRFSDEALTETVWLHDDDVASTSPETQFYYTRHEVFNERLPVFNFVADFDLRLRDGVSGLARHTVFELCRGLRRVWMTVWASLFGYTHPDRHPVYFFKSACPPNSVPVDAAGAPFDDDDYLDYRDERDTEEDEDGKEDKNNVPDNGVFQKTTSSVDTSPPYCRCKGKLGLRIITPFPACTVAVHPSVLRAVAQVLNHAVCLDAELHTLLDPISHPESSLDTGIYHHGRSVRLPYMYKMDQDDGYFMHRRLLPLFIVPDAYREHPLGFVRAQLDLRNLLHHHPPHDLPALPLSPPPRVILSVRDKICPSTEANFIETRSLNVTRYRRRGLTEVLAYHLYGGDGATAAAISDTDLQRLVVTRVWPPLLEHLTQHYEPHVSEQFTAPHVLLFQPHGACCVAVKRRDGARTRDFRCLNYTHRNPQETVQVFIDLRTEHSYALWASLWSRCFTKKCHSNAKNVHISIKIRPPDAPVPPATAV.

A disordered region spans residues 596–626 (RDTEEDEDGKEDKNNVPDNGVFQKTTSSVDT). Residues 617–626 (FQKTTSSVDT) show a composition bias toward polar residues. The CHC2-type zinc-finger motif lies at 881–920 (CLNYTHRNPQETVQVFIDLRTEHSYALWASLWSRCFTKKC).

It belongs to the herpesviridae DNA primase family. Associates with the helicase and the primase-associated factor to form the helicase-primase factor.

It is found in the host nucleus. Essential component of the helicase/primase complex. Unwinds the DNA at the replication forks and generates single-stranded DNA for both leading and lagging strand synthesis. The primase initiates primer synthesis and thereby produces large amount of short RNA primers on the lagging strand that the polymerase elongates using dNTPs. This Human cytomegalovirus (strain AD169) (HHV-5) protein is DNA primase (UL70).